A 1912-amino-acid chain; its full sequence is Receptor-type tyrosine-protein phosphatase delta (1912 aa).

Residues 1 to 20 (MVPVARPLSLLLTFFLCACA) form the signal peptide. Over 21-1266 (ETPPRFTRTP…PQPITDEEEG (1246 aa)) the chain is Extracellular. Ig-like C2-type domains lie at 24 to 114 (PRFT…TRLT) and 126 to 224 (PTID…ANLY). Intrachain disulfides connect cysteine 45–cysteine 98 and cysteine 147–cysteine 207. The mini-exon peptide A9; sufficient for interaction with IL1RAPL1 stretch occupies residues 181 to 189 (ESIGGTPIR). Positions 227–230 (ELRE) are mini-exon peptide B; required for interaction with SLITRK2 and in the function in pre-synaptic differentiation; Acts as an adjustable linker to control relative positions and orientations of the PTPRD second and third immunoglobilin domains for their simultaneous interactions with the first immunoglobilin domain of IL1RAPL1 and IL1RAP; Modulates affinity for IL1RAPL1 and IL1RAP. One can recognise an Ig-like C2-type 3 domain in the interval 236 to 318 (PRFSIPPTNH…GVIEAIAQIT (83 aa)). N-linked (GlcNAc...) asparagine glycans are attached at residues asparagine 254 and asparagine 299. A disulfide bridge connects residues cysteine 257 and cysteine 302. Fibronectin type-III domains lie at 325–415 (PPGT…TSEQ), 420–516 (APRD…TGVP), 518–607 (QPLN…TMQS), 612–709 (PPQD…TDED), 714–822 (PPRK…TTGA), 823–916 (VPGK…VPEE), 921–1016 (FPQN…TLPV), and 1020–1106 (FAKN…TAPD). Asparagine 724 and asparagine 832 each carry an N-linked (GlcNAc...) asparagine glycan. A helical transmembrane segment spans residues 1267-1287 (LIWVVGPVLAVVFIICIVIAI). Topologically, residues 1288–1912 (LLYKRKRAES…YLGSFDHYAT (625 aa)) are cytoplasmic. Positions 1298–1319 (ESRKSSLPNSKEVPSHHPTDPV) are disordered. Basic and acidic residues predominate over residues 1310–1319 (VPSHHPTDPV). 2 Tyrosine-protein phosphatase domains span residues 1357–1612 (FSQE…LLEA) and 1644–1903 (MELE…ALEY). Residues aspartate 1521, 1553–1559 (CSAGVGR), and glutamine 1597 contribute to the substrate site. Residue cysteine 1553 is the Phosphocysteine intermediate of the active site. Cysteine 1844 (phosphocysteine intermediate) is an active-site residue.

This sequence belongs to the protein-tyrosine phosphatase family. Receptor class 2A subfamily. In terms of assembly, interacts with PPFIA1, PPFIA2 and PPFIA3. Interacts (via extracellular domain) with SLITRK4 (via LRR 1 and 2 repeats). Interacts with SLITRK2; induces presynaptic differentiation. Interacts (via the second immunoglobilin domain) with IL1RAPL1 (via the first immunoglobilin domain); induces pre- and postsynaptic differentiation of neurons and synapse formation. Isoform G, isoform H, isoform I, isoform J, and isoform K do not interact with IL1RAPL1. Interacts (via the third immunoglobilin domain) with IL1RAP (via the first immunoglobilin domain); induces pre- and postsynaptic differentiation of neurons. In terms of processing, a cleavage occurs, separating the extracellular domain from the transmembrane segment. This process called 'ectodomain shedding' is thought to be involved in receptor desensitization, signal transduction and/or membrane localization. Brain, kidney, heart, and some B-cell lines.

The protein localises to the membrane. It catalyses the reaction O-phospho-L-tyrosyl-[protein] + H2O = L-tyrosyl-[protein] + phosphate. Its function is as follows. Can bidirectionally induce pre- and post-synaptic differentiation of neurons by mediating interaction with IL1RAP and IL1RAPL1 trans-synaptically. Involved in pre-synaptic differentiation through interaction with SLITRK2. The sequence is that of Receptor-type tyrosine-protein phosphatase delta (Ptprd) from Mus musculus (Mouse).